Consider the following 349-residue polypeptide: Meiotic recombination protein DMC1 homolog (349 aa).

Position 138 to 145 (138 to 145 (GEFRSGKT)) interacts with ATP. Arginine 240 contacts dsDNA. 5 residues coordinate ssDNA: arginine 240, phenylalanine 243, arginine 246, arginine 252, and arginine 320. DsDNA-binding residues include arginine 246 and arginine 252.

Belongs to the RecA family. DMC1 subfamily. As to quaternary structure, double stacked ring-shaped homooctamer.

Its subcellular location is the nucleus. May participate in meiotic recombination. The sequence is that of Meiotic recombination protein DMC1 homolog (LIM15) from Lilium longiflorum (Trumpet lily).